The chain runs to 312 residues: Ribosomal protein L11 methyltransferase (312 aa).

Residues T162, G183, D205, and N248 each contribute to the S-adenosyl-L-methionine site.

The protein belongs to the methyltransferase superfamily. PrmA family.

The protein localises to the cytoplasm. The enzyme catalyses L-lysyl-[protein] + 3 S-adenosyl-L-methionine = N(6),N(6),N(6)-trimethyl-L-lysyl-[protein] + 3 S-adenosyl-L-homocysteine + 3 H(+). Methylates ribosomal protein L11. The protein is Ribosomal protein L11 methyltransferase of Exiguobacterium sp. (strain ATCC BAA-1283 / AT1b).